Reading from the N-terminus, the 281-residue chain is Insulin-like growth factor-binding protein 2 (281 aa).

The signal sequence occupies residues 1–21; it reads MVLSEHLLVLLGAVLCAPALS. Residues 23–106 enclose the IGFBP N-terminal domain; sequence VLFRCPPCSP…VLGLGTCGKR (84 aa). 6 cysteine pairs are disulfide-bonded: C27-C56, C30-C58, C38-C59, C47-C62, C70-C83, and C77-C103. 2 disordered regions span residues 107-127 and 139-180; these read RDAE…DQSD and PAVP…RPAR. Positions 156 to 176 are enriched in basic and acidic residues; the sequence is VNRERANEQHRSKTNKSEDKK. The 83-residue stretch at 180 to 262 folds into the Thyroglobulin type-1 domain; sequence RSLCQLQLDQ…SPTVRGDPEC (83 aa). Cystine bridges form between C183-C217, C228-C239, and C241-C262. The short motif at 257-259 is the Cell attachment site element; sequence RGD.

As to quaternary structure, interacts with igf1 and igf2.

The protein localises to the secreted. IGF-binding proteins prolong the half-life of the IGFs and have been shown to either inhibit or stimulate the growth promoting effects of the IGFs on cell culture. They alter the interaction of IGFs with their cell surface receptors. The protein is Insulin-like growth factor-binding protein 2 (igfbp2) of Xenopus laevis (African clawed frog).